A 256-amino-acid polypeptide reads, in one-letter code: uncharacterized protein (256 aa).

Positions 1 to 24 are cleaved as a signal peptide; that stretch reads MIKRVNKLVLGISLLFLVISITAG. Cys25 carries the N-palmitoyl cysteine lipid modification. Cys25 carries S-diacylglycerol cysteine lipidation.

This sequence belongs to the staphylococcal tandem lipoprotein family.

It localises to the cell membrane. This is an uncharacterized protein from Staphylococcus aureus.